We begin with the raw amino-acid sequence, 241 residues long: Proteasome subunit alpha (241 aa).

It belongs to the peptidase T1A family. In terms of assembly, the 20S proteasome core is composed of 14 alpha and 14 beta subunits that assemble into four stacked heptameric rings, resulting in a barrel-shaped structure. The two inner rings, each composed of seven catalytic beta subunits, are sandwiched by two outer rings, each composed of seven alpha subunits. The catalytic chamber with the active sites is on the inside of the barrel. Has a gated structure, the ends of the cylinder being occluded by the N-termini of the alpha-subunits. Is capped by the proteasome-associated ATPase, ARC.

It is found in the cytoplasm. It participates in protein degradation; proteasomal Pup-dependent pathway. Its activity is regulated as follows. The formation of the proteasomal ATPase ARC-20S proteasome complex, likely via the docking of the C-termini of ARC into the intersubunit pockets in the alpha-rings, may trigger opening of the gate for substrate entry. Interconversion between the open-gate and close-gate conformations leads to a dynamic regulation of the 20S proteasome proteolysis activity. Functionally, component of the proteasome core, a large protease complex with broad specificity involved in protein degradation. This Frankia alni (strain DSM 45986 / CECT 9034 / ACN14a) protein is Proteasome subunit alpha.